Here is a 615-residue protein sequence, read N- to C-terminus: RUN domain-containing protein 1 (615 aa).

Positions 15–41 (TAVGPKAKDEEEEEEEEESLPPCETVR) are disordered. The span at 24 to 33 (EEEEEEEEES) shows a compositional bias: acidic residues. Serine 73 carries the post-translational modification Phosphoserine. Coiled coils occupy residues 76–102 (DATV…LSSH) and 163–238 (RVRG…NLNE). Positions 147-180 (DPCGGDESDVLPGDRPRVRGEDQSEQEKRERLET) are disordered. Basic and acidic residues predominate over residues 158 to 180 (PGDRPRVRGEDQSEQEKRERLET). Residues 423–604 (ELTTVVRKEL…LKFSLPVDLA (182 aa)) enclose the RUN domain. Serine 499 carries the post-translational modification Phosphoserine.

May play a role as p53/TP53 inhibitor and thus may have oncogenic activity. The chain is RUN domain-containing protein 1 (Rundc1) from Mus musculus (Mouse).